The sequence spans 66 residues: Protein I177L (66 aa).

N11 carries N-linked (GlcNAc...) asparagine; by host glycosylation.

Belongs to the asfivirus I177L family.

The protein resides in the virion. The protein is Protein I177L of Ornithodoros (relapsing fever ticks).